A 397-amino-acid chain; its full sequence is Probable sugar efflux transporter (397 aa).

The next 12 helical transmembrane spans lie at 15–35, 50–70, 81–101, 103–123, 136–156, 169–189, 209–229, 246–266, 275–295, 301–321, 333–353, and 364–384; these read VVTLAIAAFIFNTTEFVPVGL, VGIMLTIYAWVVALMSLPFML, LICLFVLFIASHVLSFLAWNF, VLVISRIGIAFAHAVFWSITA, AQALSLIATGTALAMVLGLPI, TFFAIGIGALITLVCLIKLLP, PALMSIYLLTVVVVTAHYTAY, FATVLLLILGGAGIIGSVVFG, PLISIAIMLLVICLMLLLPAA, LAVLSIFWGIAIMVIGLGMQV, VAMALFSGIFNIGIGAGALVG, and TIGYVGAVPALAALVWSIIIF.

This sequence belongs to the major facilitator superfamily. SotB (TC 2.A.1.2) family.

It is found in the cell inner membrane. Involved in the efflux of sugars. The physiological role may be the reduction of the intracellular concentration of toxic sugars or sugar metabolites. This is Probable sugar efflux transporter from Citrobacter koseri (strain ATCC BAA-895 / CDC 4225-83 / SGSC4696).